Here is a 535-residue protein sequence, read N- to C-terminus: T-complex protein 1 subunit zeta (535 aa).

The protein belongs to the TCP-1 chaperonin family. As to quaternary structure, heterooligomeric complex of about 850 to 900 kDa that forms two stacked rings, 12 to 16 nm in diameter.

The protein localises to the cytoplasm. In terms of biological role, molecular chaperone; assists the folding of proteins upon ATP hydrolysis. Known to play a role, in vitro, in the folding of actin and tubulin. The protein is T-complex protein 1 subunit zeta (cct6) of Schizosaccharomyces pombe (strain 972 / ATCC 24843) (Fission yeast).